We begin with the raw amino-acid sequence, 746 residues long: MDSAAKDEMQPALSPGPEWPEQERAEQLARGAALKWASGIFYRPEQLARLGQYRSREVQRTCSLESRLKSVMQSYLEGVQTGVWQLAQAIEVVQGTREALSQARGLLQGMSQALQTLEPLRERVAQHKQLQALSHLLPRLRAVPAAVSHTQTLIDGQQFLEAYVSLRELEQLREDTWAPLGGLELPVFQGLDLLFEALGQAVEAAAGAAGKLAREDPALLVAAVRVAEVETGRTTPLGQVPRDWRQRCLRALQEGLEQAHFGSPLLPAPGALPGWLEALRVALPVELATAEALVAPCCPPQYNVVQLWAHTLHSGLRRSLQNLLAGPELEAADAFALLHWALHVYLGQEMMGSLELGPEADVSQLEPLLTLENIEQLEATFVANIQASVSQWLQNALDGEVAEWGREHGPNTDPSGSYYSPMPAIVLQILEENIRVASLVSESLQQRVHGMALSELGTFLRSFSDALIRFSRDHFRGKSMAPHYVPYLLAALNHKSALSSSVSVLQLDGAPSGALAPVEAALDELQRRIYRLVLEALQAELQPLFADLPSRQWLSSPELLQSVCERTGRFCRDFWRVRNPTVQLLLAEAERAVVLQYLSALMQGRLVCRGADERTQAAERLRHDAAQLQQLFLSLGLEENAHCAPVLLALRELLNLRDPALLGLEVAGLRQQFPDVSEDHVSALLGLRGDLSREQHLAALSSLQAALPPSPRASRRVLFSLVPAPALAPASCLPSGSCARALLLAE.

A disordered region spans residues 1-23 (MDSAAKDEMQPALSPGPEWPEQE). Residues 1–370 (MDSAAKDEMQ…DVSQLEPLLT (370 aa)) are mediates interaction with EXOC2, EXOC4 and EXOC5.

This sequence belongs to the SEC6 family. Interacts with EXOC2, EXOC4 and EXOC5; may be part of the exocyst.

It localises to the cytoplasmic vesicle. Its subcellular location is the secretory vesicle. In terms of biological role, as part of the exocyst, may play a role in regulated exocytosis of insulin granules. In Homo sapiens (Human), this protein is Exocyst complex component 3-like protein (EXOC3L1).